A 345-amino-acid polypeptide reads, in one-letter code: 3-isopropylmalate dehydrogenase (345 aa).

76–87 (GPKYDNAPVRPE) contributes to the NAD(+) binding site. Arg-94, Arg-104, Arg-132, and Asp-216 together coordinate substrate. Mg(2+) is bound by residues Asp-216, Asp-240, and Asp-244. 274 to 286 (GSAPDIAGQGIAN) contacts NAD(+).

Belongs to the isocitrate and isopropylmalate dehydrogenases family. LeuB type 1 subfamily. As to quaternary structure, homodimer. Mg(2+) serves as cofactor. It depends on Mn(2+) as a cofactor.

Its subcellular location is the cytoplasm. It catalyses the reaction (2R,3S)-3-isopropylmalate + NAD(+) = 4-methyl-2-oxopentanoate + CO2 + NADH. It participates in amino-acid biosynthesis; L-leucine biosynthesis; L-leucine from 3-methyl-2-oxobutanoate: step 3/4. Functionally, catalyzes the oxidation of 3-carboxy-2-hydroxy-4-methylpentanoate (3-isopropylmalate) to 3-carboxy-4-methyl-2-oxopentanoate. The product decarboxylates to 4-methyl-2 oxopentanoate. This is 3-isopropylmalate dehydrogenase from Streptococcus thermophilus (strain CNRZ 1066).